Reading from the N-terminus, the 1021-residue chain is Disease resistance protein Pikm2-TS (1021 aa).

The structured coiled coil (CC) domain stretch occupies residues 1–182; sequence MELVVGASEA…PQIIGIKEPV (182 aa). Residues 186–519 enclose the NB-ARC domain; it reads TVMEELEVWL…WIAEGFANEK (334 aa). A disordered region spans residues 297–317; sequence PENDGNPDNTPIRLQETTDDD. LRR repeat units follow at residues 612–634, 659–682, and 683–705; these read LAQVRSLTVFGNLNHVPFHSFNY, MLLLKYLSIRRTEISKIPSKIQKL, and EYLETLDIRETYVRDLPKSIVQL. Residues 719–751 form a disordered region; it reads RKGLRLPQEKSKKPIKNPSPQGKTKEPAKKGFL. 6 LRR repeats span residues 785-807, 817-841, 843-865, 866-888, 912-935, and 957-981; these read LTGLRKLAIYKLNITKGGDTFKQ, SCGLQTLAINDENSEFINSLGDMPA, PRYLVALELSGKLEKLPKWITSI, TTLNKLTISVTVLRTETLEILHI, KDILENNKLDSDGEIVIPAEGFKS, and MPALEIIEMRFKDFEGLFGIEILEN.

This sequence belongs to the disease resistance NB-LRR family. Constitutively expressed.

In terms of biological role, disease resistance (R) protein. Resistance proteins guard the plant against pathogens that contain an appropriate avirulence protein via an indirect interaction with this avirulence protein. That triggers a defense system including the hypersensitive response, which restricts the pathogen growth. Contribution of Pikm-1 is required to recognize the effector avirulence protein AVR-Pik. In Oryza sativa subsp. japonica (Rice), this protein is Disease resistance protein Pikm2-TS.